The following is a 479-amino-acid chain: Ribulose bisphosphate carboxylase large chain (479 aa).

The propeptide occupies 1–2 (MS). Asn-123 and Thr-173 together coordinate substrate. The active-site Proton acceptor is Lys-175. Residue Lys-177 participates in substrate binding. Residues Lys-201, Asp-203, and Glu-204 each contribute to the Mg(2+) site. Lys-201 carries the N6-carboxylysine modification. Position 208 is a phosphoserine (Ser-208). Residue His-294 is the Proton acceptor of the active site. Arg-295 and His-327 together coordinate substrate. Phosphothreonine is present on Thr-330. Ser-379 lines the substrate pocket.

The protein belongs to the RuBisCO large chain family. Type I subfamily. As to quaternary structure, heterohexadecamer of 8 large chains and 8 small chains; disulfide-linked. The disulfide link is formed within the large subunit homodimers. The cofactor is Mg(2+). In terms of processing, the disulfide bond which can form in the large chain dimeric partners within the hexadecamer appears to be associated with oxidative stress and protein turnover.

It localises to the plastid. The protein localises to the chloroplast. The catalysed reaction is 2 (2R)-3-phosphoglycerate + 2 H(+) = D-ribulose 1,5-bisphosphate + CO2 + H2O. It catalyses the reaction D-ribulose 1,5-bisphosphate + O2 = 2-phosphoglycolate + (2R)-3-phosphoglycerate + 2 H(+). In terms of biological role, ruBisCO catalyzes two reactions: the carboxylation of D-ribulose 1,5-bisphosphate, the primary event in carbon dioxide fixation, as well as the oxidative fragmentation of the pentose substrate in the photorespiration process. Both reactions occur simultaneously and in competition at the same active site. This Olimarabidopsis pumila (Dwarf rocket) protein is Ribulose bisphosphate carboxylase large chain.